A 398-amino-acid chain; its full sequence is Stabilizer of axonemal microtubules 2 (398 aa).

Mn regions lie at residues 114–126 (STTFQDDFVPQEI), 148–162 (ITSHRLDYIPHQLEL), 248–260 (NSTSHLDYVPYQA), 282–296 (KSIMKEDFPAWESCR), 316–328 (LSTFRSHYVPHEL), and 350–364 (VTMYSVEYTPKRQEI).

It belongs to the FAM154 family.

The protein is Stabilizer of axonemal microtubules 2 (SAXO2) of Homo sapiens (Human).